The sequence spans 159 residues: MHKQVEIFTDGSCLGNPGPGGYGAILRYQQHEKTLSEGFFMTTNNRMELLAAIVALEALKFPCKITLTTDSQYVRQGITKWIHSWKKRQWRKADKSPVLNVDLWKRLDKAIERHEIEWHWVKGHAGHDENERCDELAKAAAQSPTKEDTGYLESQQDKT.

The RNase H type-1 domain maps to 1–142 (MHKQVEIFTD…CDELAKAAAQ (142 aa)). Positions 10, 48, 70, and 134 each coordinate Mg(2+). A disordered region spans residues 135 to 159 (ELAKAAAQSPTKEDTGYLESQQDKT). Over residues 145–159 (TKEDTGYLESQQDKT) the composition is skewed to basic and acidic residues.

The protein belongs to the RNase H family. Monomer. Mg(2+) serves as cofactor.

It is found in the cytoplasm. The enzyme catalyses Endonucleolytic cleavage to 5'-phosphomonoester.. In terms of biological role, endonuclease that specifically degrades the RNA of RNA-DNA hybrids. The protein is Ribonuclease H of Proteus mirabilis (strain HI4320).